Reading from the N-terminus, the 419-residue chain is Peptide chain release factor subunit 1 (419 aa).

The protein belongs to the eukaryotic release factor 1 family. Heterodimer of two subunits, one of which binds GTP.

It is found in the cytoplasm. Directs the termination of nascent peptide synthesis (translation) in response to the termination codons UAA, UAG and UGA. In Methanococcus maripaludis (strain DSM 14266 / JCM 13030 / NBRC 101832 / S2 / LL), this protein is Peptide chain release factor subunit 1.